The primary structure comprises 98 residues: Dehydrin HIRD11 (98 aa).

The tract at residues 1 to 98 (MAGLINKIGD…HSSSSDSDSD (98 aa)) is disordered. Residues 19–72 (KEGEHKKEEEHKKHVDEHKSGEHKEGIVDKIKDKIHGGEGKSHDGEGKSHDGEK) are compositionally biased toward basic and acidic residues. Basic residues predominate over residues 73–82 (KKKKDKKEKK).

The protein belongs to the KS-type dehydrin family. As to quaternary structure, interacts with PXL1. Post-translationally, phosphorylated in vivo. Phosphorylated in vitro by PXL1. In terms of tissue distribution, highly expressed in the cambial zone of the stem vasculature (at protein level). Expressed in roots, rosettes leaves, stems, cauline leaves, flowers and siliques.

It localises to the cytoplasm. Its subcellular location is the nucleus. Functionally, intrinsically disordered and metal-binding protein. Binds to the divalent cations cobalt, nickel, copper and zinc, but not to magnesium, calcium, manganese or cadmium. Binding to metal ions decreases disordered state, decreases susceptibility to trypsin and promotes self-association. Can reduce the formation of reactive oxygen species (ROS) in a copper-ascorbate in vitro system. This Arabidopsis thaliana (Mouse-ear cress) protein is Dehydrin HIRD11.